The following is a 140-amino-acid chain: ATP synthase epsilon chain, chloroplastic (140 aa).

Belongs to the ATPase epsilon chain family. In terms of assembly, F-type ATPases have 2 components, CF(1) - the catalytic core - and CF(0) - the membrane proton channel. CF(1) has five subunits: alpha(3), beta(3), gamma(1), delta(1), epsilon(1). CF(0) has three main subunits: a, b and c.

The protein localises to the plastid. The protein resides in the chloroplast thylakoid membrane. Its function is as follows. Produces ATP from ADP in the presence of a proton gradient across the membrane. The chain is ATP synthase epsilon chain, chloroplastic from Panax ginseng (Korean ginseng).